We begin with the raw amino-acid sequence, 550 residues long: Hydroxylamine reductase (550 aa).

Residues Cys-3, Cys-6, Cys-18, and Cys-25 each coordinate [2Fe-2S] cluster. Residues His-249, Glu-273, Cys-317, Cys-405, Cys-433, Cys-458, Glu-492, and Lys-494 each contribute to the hybrid [4Fe-2O-2S] cluster site. Cysteine persulfide is present on Cys-405.

The protein belongs to the HCP family. It depends on [2Fe-2S] cluster as a cofactor. The cofactor is hybrid [4Fe-2O-2S] cluster.

It localises to the cytoplasm. The catalysed reaction is A + NH4(+) + H2O = hydroxylamine + AH2 + H(+). Functionally, catalyzes the reduction of hydroxylamine to form NH(3) and H(2)O. The protein is Hydroxylamine reductase of Escherichia coli O6:H1 (strain CFT073 / ATCC 700928 / UPEC).